Consider the following 76-residue polypeptide: Small ribosomal subunit protein bS18 (76 aa).

Belongs to the bacterial ribosomal protein bS18 family. As to quaternary structure, part of the 30S ribosomal subunit. Forms a tight heterodimer with protein bS6.

In terms of biological role, binds as a heterodimer with protein bS6 to the central domain of the 16S rRNA, where it helps stabilize the platform of the 30S subunit. In Pseudomonas aeruginosa (strain LESB58), this protein is Small ribosomal subunit protein bS18.